A 610-amino-acid polypeptide reads, in one-letter code: All-trans-retinol 13,14-reductase (610 aa).

Residues 1 to 18 (MWLPLVLFLAVLLLAVVC) form the signal peptide.

It belongs to the carotenoid/retinoid oxidoreductase family. CrtISO subfamily. NAD(+) is required as a cofactor. NADP(+) serves as cofactor. The cofactor is FAD.

It is found in the endoplasmic reticulum membrane. The catalysed reaction is all-trans-13,14-dihydroretinol + A = all-trans-retinol + AH2. Its function is as follows. Catalyzes the saturation of all-trans-retinol to all-trans-13,14-dihydroretinol. Does not exhibit any activity toward all-trans-retinoic acid, nor 9-cis, 11-cis or 13-cis-retinol isomers. May play a role in the metabolism of vitamin A. Independently of retinol conversion, may regulate liver metabolism upstream of MLXIPL/ChREBP. May play a role in adipocyte differentiation. The sequence is that of All-trans-retinol 13,14-reductase (RETSAT) from Macaca fascicularis (Crab-eating macaque).